An 89-amino-acid polypeptide reads, in one-letter code: UPF0147 protein TV0625 (89 aa).

It belongs to the UPF0147 family.

The protein is UPF0147 protein TV0625 of Thermoplasma volcanium (strain ATCC 51530 / DSM 4299 / JCM 9571 / NBRC 15438 / GSS1).